Here is a 443-residue protein sequence, read N- to C-terminus: Threonine/serine transporter TdcC (443 aa).

11 helical membrane passes run 22–42, 44–64, 97–117, 140–160, 163–183, 207–227, 259–279, 319–339, 366–386, 389–409, and 423–443; these read TTWTLGLFGTAIGAGVLFFPI, AGFGGLIPILLMLVLAYPIAF, GVVITFLYFFAICPLLWIYGV, FVALFLLLLMAFVIWFGKDLM, VMSFLVFPFIASLILISLSLI, ILVTVWLGISIMVFSFNFSPI, ASLLMVAVVMFFAFSCLFTLS, ASIIALVAIFKSFFGHYLGTL, ISMIFIMGSTWVVAYANPNIL, IEAMGAPIIASLLCLLPMFAI, and ENLFVTAVGLLTILNIVYKLF.

It belongs to the amino acid/polyamine transporter 2 family. SdaC/TdcC subfamily.

It is found in the cell inner membrane. The enzyme catalyses L-threonine(in) + H(+)(in) = L-threonine(out) + H(+)(out). The catalysed reaction is L-serine(in) + H(+)(in) = L-serine(out) + H(+)(out). Its function is as follows. Involved in the import of threonine and serine into the cell, with the concomitant import of a proton (symport system). This is Threonine/serine transporter TdcC from Enterobacter sp. (strain 638).